The sequence spans 944 residues: UvrABC system protein A (944 aa).

The ABC transporter 1 domain maps to 1 to 242; that stretch reads MSKVDFLHIK…GKGIVKVENV (242 aa). Residue 34-41 coordinates ATP; that stretch reads GLSGSGKS. The segment at 256-283 adopts a C4-type; degenerate zinc-finger fold; that stretch reads CPKGDFEMPKIETRLFSFNSPYGMCQNC. ABC transporter domains are found at residues 359–597 and 610–935; these read EEID…KYLS and SGSG…EKSY. An ATP-binding site is contributed by 643-650; sequence GVSGSGKS. A C4-type zinc finger spans residues 744–770; that stretch reads CEKCSGDGSIKIEMFFLPNVYITCDHC.

Belongs to the ABC transporter superfamily. UvrA family. Forms a heterotetramer with UvrB during the search for lesions.

The protein resides in the cytoplasm. Its function is as follows. The UvrABC repair system catalyzes the recognition and processing of DNA lesions. UvrA is an ATPase and a DNA-binding protein. A damage recognition complex composed of 2 UvrA and 2 UvrB subunits scans DNA for abnormalities. When the presence of a lesion has been verified by UvrB, the UvrA molecules dissociate. In Mycoplasmopsis pulmonis (strain UAB CTIP) (Mycoplasma pulmonis), this protein is UvrABC system protein A.